Reading from the N-terminus, the 80-residue chain is Conotoxin Vi6.2 (80 aa).

The first 22 residues, 1-22 (MKLTCVLITTVLFLTASQLITA), serve as a signal peptide directing secretion. Positions 23-47 (DYSRDKRQYRAVRLRDEMRNFKGAR) are excised as a propeptide. Intrachain disulfides connect C49–C62, C56–C67, and C61–C77. Residues P60 and P63 each carry the 4-hydroxyproline modification.

It belongs to the conotoxin O1 superfamily. In terms of tissue distribution, expressed by the venom duct.

It localises to the secreted. In terms of biological role, ion channel inhibitor that inhibits the increase in intracellular calcium upon depolarization in DRG neurons. In vivo, both intraperitoneal and intracranial injections into mice induce hyperactivity. The protein is Conotoxin Vi6.2 of Conus virgo (Virgin cone).